A 953-amino-acid chain; its full sequence is Coatomer subunit beta (953 aa).

The residue at position 2 (threonine 2) is an N-acetylthreonine. HEAT repeat units lie at residues 96-131 (HEMI…KEAE), 132-168 (LLEP…NFEH), 240-276 (SERA…SAPT), 277-314 (AIKA…HPAH), 316-353 (RVLQ…SRNV), and 396-433 (DMAA…RFDN). Lysine 494 carries the N6-acetyllysine modification.

As to quaternary structure, oligomeric complex that consists of at least the alpha, beta, beta', gamma, delta, epsilon and zeta subunits. Interacts with ARF1 (myristoylated); this interaction is required for binding of COPB1 to Golgi membranes. Interacts with CAPN8 and PRKCE. Interacts with SCYL1. Interacts with COPG1. Interacts (via trunk domain) with ARF1 (via switch I region); the interaction is direct. Interacts with KCNK2 (via N-terminus); this interaction increases the channel-mediated whole cell currents and promotes plasma membrane expression of KCNK2. Interacts with STX17. Interacts with TMEM115. Interacts with TMEM41B. Proteolytically cleaved between Ser-528 and Ser-529 by CAPN8.

The protein localises to the cytoplasm. The protein resides in the cytosol. It localises to the golgi apparatus membrane. It is found in the cytoplasmic vesicle. Its subcellular location is the COPI-coated vesicle membrane. The protein localises to the cell membrane. The protein resides in the endoplasmic reticulum-Golgi intermediate compartment. Functionally, the coatomer is a cytosolic protein complex that binds to dilysine motifs and reversibly associates with Golgi non-clathrin-coated vesicles, which further mediate biosynthetic protein transport from the ER, via the Golgi up to the trans Golgi network. Coatomer complex is required for budding from Golgi membranes, and is essential for the retrograde Golgi-to-ER transport of dilysine-tagged proteins. In mammals, the coatomer can only be recruited by membranes associated to ADP-ribosylation factors (ARFs), which are small GTP-binding proteins; the complex also influences the Golgi structural integrity, as well as the processing, activity, and endocytic recycling of LDL receptors. Involved in the Golgi disassembly and reassembly processes during cell cycle. Plays a functional role in facilitating the transport of kappa-type opioid receptor mRNAs into axons and enhances translation of these proteins. Required for limiting lipid storage in lipid droplets. Involved in lipid homeostasis by regulating the presence of perilipin family members PLIN2 and PLIN3 at the lipid droplet surface and promoting the association of adipocyte surface triglyceride lipase (PNPLA2) with the lipid droplet to mediate lipolysis. Involved in autophagy by playing a role in early endosome function. Plays a role in organellar compartmentalization of secretory compartments including endoplasmic reticulum (ER)-Golgi intermediate compartment (ERGIC), Golgi, trans-Golgi network (TGN) and recycling endosomes, and in biosynthetic transport of CAV1. The protein is Coatomer subunit beta (COPB1) of Bos taurus (Bovine).